Reading from the N-terminus, the 784-residue chain is Melanoma-associated antigen D1 (784 aa).

The tract at residues 41 to 67 is disordered; sequence PTNQATAAASGPNASPQSSQPPSANEV. Residues 47–65 show a composition bias toward low complexity; sequence AAASGPNASPQSSQPPSAN. Tyr-97 bears the Phosphotyrosine mark. Polar residues-rich tracts occupy residues 195–214, 232–246, 259–269, and 306–320; these read PTAE…TSQA, AQTS…NLES, NNLNVEESSSG, and LAWQ…QPAR. The disordered stretch occupies residues 195–339; it reads PTAETQTQNI…PARQTPPAWQ (145 aa). 19 repeat units span residues 302 to 307, 308 to 313, 314 to 319, 338 to 343, 344 to 349, 350 to 355, 356 to 361, 362 to 367, 368 to 373, 374 to 379, 380 to 385, 386 to 391, 392 to 397, 398 to 403, 404 to 409, 410 to 415, 416 to 421, 422 to 427, and 428 to 433. The segment at 302 to 450 is 22 X 6 AA tandem repeats of W-[PQ]-X-P-X-X; sequence WQTPLAWQNP…VPPDWQNLRP (149 aa). The disordered stretch occupies residues 379 to 418; sequence AWQNPPGWQTPPGWQTPPGWQGPPDWQGPPDWPLPPDWPL. The span at 383–403 shows a compositional bias: low complexity; sequence PPGWQTPPGWQTPPGWQGPPD. Residues 404–418 show a composition bias toward pro residues; it reads WQGPPDWPLPPDWPL. One copy of the 20; approximate repeat lies at 434-438; that stretch reads WIPTD. 2 repeat units span residues 439-444 and 445-450. Residues 441–471 form a disordered region; the sequence is VPPDWQNLRPSPNLRPSPNSRASQNLGASQP. The segment covering 447–461 has biased composition (low complexity); it reads NLRPSPNLRPSPNSR. The MAGE domain maps to 477-675; that stretch reads LQERANKLVK…RDWTAQFMEA (199 aa).

In terms of assembly, interacts with DLX5, DLX7 and MSX2 and forms homomultimers. Interacts with UNC5A. Interacts with TRIM28 and PJA1. Interacts with NGFR/p75NTR and RORA.

The protein resides in the cytoplasm. Its subcellular location is the cell membrane. It localises to the nucleus. Involved in the apoptotic response after nerve growth factor (NGF) binding in neuronal cells. Inhibits cell cycle progression, and facilitates NGFR-mediated apoptosis. May act as a regulator of the function of DLX family members. May enhance ubiquitin ligase activity of RING-type zinc finger-containing E3 ubiquitin-protein ligases. Proposed to act through recruitment and/or stabilization of the Ubl-conjugating enzyme (E2) at the E3:substrate complex. Plays a role in the circadian rhythm regulation. May act as RORA co-regulator, modulating the expression of core clock genes such as BMAL1 and NFIL3, induced, or NR1D1, repressed. The sequence is that of Melanoma-associated antigen D1 (MAGED1) from Sus scrofa (Pig).